The primary structure comprises 87 residues: UPF0250 protein PC1_1177 (87 aa).

The protein belongs to the UPF0250 family.

This chain is UPF0250 protein PC1_1177, found in Pectobacterium carotovorum subsp. carotovorum (strain PC1).